Consider the following 95-residue polypeptide: MGGISIWQLLIIALIVVLLFGTKKLRSLGGDLGGAVKGFKNAMTSEEDKKALEDNAADKPAADAAKVTETAKVAETAPVAETAEKKAESKGKEQA.

Residues 1–21 form a helical membrane-spanning segment; sequence MGGISIWQLLIIALIVVLLFG. A compositionally biased stretch (basic and acidic residues) spans 50–61; the sequence is KALEDNAADKPA. The interval 50 to 95 is disordered; that stretch reads KALEDNAADKPAADAAKVTETAKVAETAPVAETAEKKAESKGKEQA. Low complexity predominate over residues 62 to 81; sequence ADAAKVTETAKVAETAPVAE. Basic and acidic residues predominate over residues 82–95; it reads TAEKKAESKGKEQA.

It belongs to the TatA/E family. As to quaternary structure, the Tat system comprises two distinct complexes: a TatABC complex, containing multiple copies of TatA, TatB and TatC subunits, and a separate TatA complex, containing only TatA subunits. Substrates initially bind to the TatABC complex, which probably triggers association of the separate TatA complex to form the active translocon.

The protein localises to the cell inner membrane. Functionally, part of the twin-arginine translocation (Tat) system that transports large folded proteins containing a characteristic twin-arginine motif in their signal peptide across membranes. TatA could form the protein-conducting channel of the Tat system. The polypeptide is Sec-independent protein translocase protein TatA (Shewanella halifaxensis (strain HAW-EB4)).